A 335-amino-acid polypeptide reads, in one-letter code: MGNCLHPAELSPSTQNSSQLNSDLWNFSYDGNDSFPDVDYDANLEAAAPCHSCNLLDDSALPFFILVSVLGILASGTVLFMFFRPLFHWQLCPGWPVLAQLAVGSALFSIVVPILAPGLGNTRSSALCSLGYCVWYGSAFAQALLLGCHASLGPKLGAGQVPGLTLGLSVGLWGVAALLTLPITLASGASGGLCTPAYSMELKALQATHAVACLAVFVLLPLGLFGAKGLKKALGMGPGPWMNILWAWFIFWWPHGVVLGLDFLVRSKLLLLSTCLAQQALDLLLNLAEALAILHCVATPLLLALFCHQATRTLLPSLPLPEGWSSHLDTLGSES.

Residues 1-62 (MGNCLHPAEL…CNLLDDSALP (62 aa)) are Extracellular-facing. N-linked (GlcNAc...) asparagine glycosylation is found at Asn-16, Asn-26, and Asn-32. Intrachain disulfides connect Cys-50/Cys-275 and Cys-128/Cys-194. A helical transmembrane segment spans residues 63-83 (FFILVSVLGILASGTVLFMFF). The Cytoplasmic segment spans residues 84–94 (RPLFHWQLCPG). A helical membrane pass occupies residues 95-115 (WPVLAQLAVGSALFSIVVPIL). Over 116 to 128 (APGLGNTRSSALC) the chain is Extracellular. Residues 129–152 (SLGYCVWYGSAFAQALLLGCHASL) form a helical membrane-spanning segment. Over 153 to 165 (GPKLGAGQVPGLT) the chain is Cytoplasmic. Residues 166 to 186 (LGLSVGLWGVAALLTLPITLA) traverse the membrane as a helical segment. Residues 187 to 206 (SGASGGLCTPAYSMELKALQ) lie on the Extracellular side of the membrane. A helical transmembrane segment spans residues 207 to 227 (ATHAVACLAVFVLLPLGLFGA). Over 228-243 (KGLKKALGMGPGPWMN) the chain is Cytoplasmic. A helical membrane pass occupies residues 244–264 (ILWAWFIFWWPHGVVLGLDFL). The Extracellular segment spans residues 265–286 (VRSKLLLLSTCLAQQALDLLLN). A helical membrane pass occupies residues 287-307 (LAEALAILHCVATPLLLALFC). The Cytoplasmic portion of the chain corresponds to 308–335 (HQATRTLLPSLPLPEGWSSHLDTLGSES).

This sequence belongs to the G-protein coupled receptor 1 family. Atypical chemokine receptor subfamily. As to quaternary structure, (Microbial infection) Interacts (via N-terminal extracellular domain) with Plasmodium knowlesi Duffy receptor alpha form (DBPalpha) (via region II).

It localises to the early endosome. Its subcellular location is the recycling endosome. It is found in the membrane. In terms of biological role, atypical chemokine receptor that controls chemokine levels and localization via high-affinity chemokine binding that is uncoupled from classic ligand-driven signal transduction cascades, resulting instead in chemokine sequestration, degradation, or transcytosis. Also known as interceptor (internalizing receptor) or chemokine-scavenging receptor or chemokine decoy receptor. Has a promiscuous chemokine-binding profile, interacting with inflammatory chemokines of both the CXC and the CC subfamilies but not with homeostatic chemokines. Acts as a receptor for chemokines including CCL2, CCL5, CCL7, CCL11, CCL13, CCL14, CCL17, CXCL5, CXCL6, IL8/CXCL8, CXCL11, GRO, RANTES, MCP-1 and TARC. May regulate chemokine bioavailability and, consequently, leukocyte recruitment through two distinct mechanisms: when expressed in endothelial cells, it sustains the abluminal to luminal transcytosis of tissue-derived chemokines and their subsequent presentation to circulating leukocytes; when expressed in erythrocytes, serves as blood reservoir of cognate chemokines but also as a chemokine sink, buffering potential surges in plasma chemokine levels. Its function is as follows. (Microbial infection) Acts as a receptor for the malaria parasite Plasmodium knowlesi. This chain is Atypical chemokine receptor 1 (ACKR1), found in Macaca mulatta (Rhesus macaque).